Here is a 215-residue protein sequence, read N- to C-terminus: Cytochrome b6 (215 aa).

A helical membrane pass occupies residues 32-52; sequence IFYCLGGITLVCFLIQFATGF. C35 is a binding site for heme c. The heme b site is built by H86 and H100. Helical transmembrane passes span 90–110, 116–136, and 186–206; these read ASMMVLMMILHVFRVYLTGGF, LTWVSGVILAVITVSFGVTGY, and AHTFVLPWLIAVFMLFHFLMI. Positions 187 and 202 each coordinate heme b.

The protein belongs to the cytochrome b family. PetB subfamily. The 4 large subunits of the cytochrome b6-f complex are cytochrome b6, subunit IV (17 kDa polypeptide, PetD), cytochrome f and the Rieske protein, while the 4 small subunits are PetG, PetL, PetM and PetN. The complex functions as a dimer. Heme b serves as cofactor. It depends on heme c as a cofactor.

It localises to the cellular thylakoid membrane. In terms of biological role, component of the cytochrome b6-f complex, which mediates electron transfer between photosystem II (PSII) and photosystem I (PSI), cyclic electron flow around PSI, and state transitions. The sequence is that of Cytochrome b6 from Nostoc punctiforme (strain ATCC 29133 / PCC 73102).